Here is a 285-residue protein sequence, read N- to C-terminus: Bifunctional protein FolD (285 aa).

Residues 163 to 165, S188, and A231 each bind NADP(+); that span reads GRS.

Belongs to the tetrahydrofolate dehydrogenase/cyclohydrolase family. Homodimer.

The catalysed reaction is (6R)-5,10-methylene-5,6,7,8-tetrahydrofolate + NADP(+) = (6R)-5,10-methenyltetrahydrofolate + NADPH. The enzyme catalyses (6R)-5,10-methenyltetrahydrofolate + H2O = (6R)-10-formyltetrahydrofolate + H(+). It participates in one-carbon metabolism; tetrahydrofolate interconversion. In terms of biological role, catalyzes the oxidation of 5,10-methylenetetrahydrofolate to 5,10-methenyltetrahydrofolate and then the hydrolysis of 5,10-methenyltetrahydrofolate to 10-formyltetrahydrofolate. This is Bifunctional protein FolD from Oenococcus oeni (strain ATCC BAA-331 / PSU-1).